Consider the following 243-residue polypeptide: Vesicle-associated membrane protein-associated protein B (243 aa).

The residue at position 2 (alanine 2) is an N-acetylalanine. Over 2 to 218 (AKVEQVLSLE…AALAASGKEE (217 aa)) the chain is Cytoplasmic. An MSP domain is found at 7–124 (VLSLEPQHEL…MDSKLRCVFE (118 aa)). Serine 146 carries the phosphoserine modification. Lysine 147 participates in a covalent cross-link: Glycyl lysine isopeptide (Lys-Gly) (interchain with G-Cter in SUMO1). Serine 159 is subject to Phosphoserine. Positions 161–196 (LDDAEVKKVMEECRRLQGEVQRLREESRQLKEEDGL) form a coiled coil. Serine 206 carries the phosphoserine modification. Residues 219-239 (GLSARLLALVVLFFIVGVIIG) traverse the membrane as a helical; Anchor for type IV membrane protein segment.

Belongs to the VAMP-associated protein (VAP) (TC 9.B.17) family. As to quaternary structure, homodimer, and heterodimer with VAPA. Interacts with VAMP1 and VAMP2. Interacts (via MSP domain) with ZFYVE27. Interacts with RMDN3. Interacts with KIF5A in a ZFYVE27-dependent manner. Interacts (via MSP domain) with STARD3 (via phospho-FFAT motif). Interacts with STARD3NL (via FFAT motif). Interacts with CERT1. Interacts with PLEKHA3 and SACM1L to form a ternary complex. Interacts with VPS13A (via FFAT motif). Interacts with RB1CC1 (via phosphorylated FFAT motif), MIGA2 (via phosphorylated FFAT motif), RMDN3 (via phosphorylated FFAT motif), OSBPL1A (via FFAT motif), KCNB1 (via phosphorylated FFAT motif) and KCNB2 (via phosphorylated FFAT motif). Interacts (via MSP domain) with WDR44; the interactions connect the endoplasmic reticulum (ER) with the endosomal tubule. In terms of tissue distribution, ubiquitous.

The protein resides in the endoplasmic reticulum membrane. Endoplasmic reticulum (ER)-anchored protein that mediates the formation of contact sites between the ER and endosomes via interaction with FFAT motif-containing proteins such as STARD3 or WDR44. Interacts with STARD3 in a FFAT motif phosphorylation dependent manner. Via interaction with WDR44 participates in neosynthesized protein export. Participates in the endoplasmic reticulum unfolded protein response (UPR) by inducing ERN1/IRE1 activity. Involved in cellular calcium homeostasis regulation. The protein is Vesicle-associated membrane protein-associated protein B of Rattus norvegicus (Rat).